Reading from the N-terminus, the 462-residue chain is Argininosuccinate lyase (462 aa).

Belongs to the lyase 1 family. Argininosuccinate lyase subfamily.

Its subcellular location is the cytoplasm. It carries out the reaction 2-(N(omega)-L-arginino)succinate = fumarate + L-arginine. It participates in amino-acid biosynthesis; L-arginine biosynthesis; L-arginine from L-ornithine and carbamoyl phosphate: step 3/3. The sequence is that of Argininosuccinate lyase from Prochlorococcus marinus (strain SARG / CCMP1375 / SS120).